The following is a 183-amino-acid chain: Ribonuclease H (183 aa).

The RNase H type-1 domain occupies 2–151 (SQARFIAFSD…VDQLAQAAAR (150 aa)). 4 residues coordinate Mg(2+): Asp11, Glu57, Asp79, and Asp143.

It belongs to the RNase H family. As to quaternary structure, monomer. Requires Mg(2+) as cofactor.

The protein resides in the cytoplasm. It carries out the reaction Endonucleolytic cleavage to 5'-phosphomonoester.. Functionally, endonuclease that specifically degrades the RNA of RNA-DNA hybrids. The protein is Ribonuclease H of Anaeromyxobacter dehalogenans (strain 2CP-C).